The chain runs to 264 residues: Thiazole synthase (264 aa).

The active-site Schiff-base intermediate with DXP is Lys-106. Residues Gly-167, Ala-193–Gly-194, and Asn-215–Thr-216 contribute to the 1-deoxy-D-xylulose 5-phosphate site.

Belongs to the ThiG family. In terms of assembly, homotetramer. Forms heterodimers with either ThiH or ThiS.

Its subcellular location is the cytoplasm. It carries out the reaction [ThiS sulfur-carrier protein]-C-terminal-Gly-aminoethanethioate + 2-iminoacetate + 1-deoxy-D-xylulose 5-phosphate = [ThiS sulfur-carrier protein]-C-terminal Gly-Gly + 2-[(2R,5Z)-2-carboxy-4-methylthiazol-5(2H)-ylidene]ethyl phosphate + 2 H2O + H(+). The protein operates within cofactor biosynthesis; thiamine diphosphate biosynthesis. Functionally, catalyzes the rearrangement of 1-deoxy-D-xylulose 5-phosphate (DXP) to produce the thiazole phosphate moiety of thiamine. Sulfur is provided by the thiocarboxylate moiety of the carrier protein ThiS. In vitro, sulfur can be provided by H(2)S. This Xanthomonas euvesicatoria pv. vesicatoria (strain 85-10) (Xanthomonas campestris pv. vesicatoria) protein is Thiazole synthase.